A 393-amino-acid chain; its full sequence is Bone morphogenetic protein 2 (393 aa).

The N-terminal stretch at 1 to 19 (MVAGTRCLLVLLLPQVLLG) is a signal peptide. The propeptide at 20–279 (GAAGLIPELG…GHPLHKREKR (260 aa)) is cleaved by PCSK5. The residue at position 85 (Ser85) is a Phosphoserine. N-linked (GlcNAc...) asparagine glycosylation is found at Asn133, Asn161, and Asn197. Positions 268–290 (GKGHPLHKREKRQAKHKQRKRLK) are disordered. Over residues 271 to 290 (HPLHKREKRQAKHKQRKRLK) the composition is skewed to basic residues. 3 cysteine pairs are disulfide-bonded: Cys293–Cys358, Cys322–Cys390, and Cys326–Cys392. A glycan (N-linked (GlcNAc...) asparagine) is linked at Asn335.

The protein belongs to the TGF-beta family. Homodimer; disulfide-linked. Interacts with SOSTDC1. Interacts with GREM2, RGMA, RGMB and RGMC. Interacts with ASPN. Interacts with MAFP5. Interacts with FBN1 (via N-terminal domain) and FBN2. Interacts with type I receptor BMPR1A. Interacts with type II receptor BMPR2. Interacts with SCUBE3. Interacts with TNFAIP6 (primarily via Link domain); this interaction is inhibited by hyaluronan. Interacts with ERFE. Interacts with BMPR1A/ALK3; the interaction may induce HAMP expression. Forms heterodimers with BMP6 in vitro; the heterodimer then binds to its receptor BMPR1A /ALK3 and may induce HAMP expression. Interacts with TGFBR3. In terms of tissue distribution, expressed in femur, calvaria, trachea, lung and ovary.

Its subcellular location is the secreted. Functionally, growth factor of the TGF-beta superfamily that plays essential roles in many developmental processes, including cardiogenesis, neurogenesis, and osteogenesis. Induces cartilage and bone formation. Initiates the canonical BMP signaling cascade by associating with type I receptor BMPR1A and type II receptor BMPR2. Once all three components are bound together in a complex at the cell surface, BMPR2 phosphorylates and activates BMPR1A. In turn, BMPR1A propagates signal by phosphorylating SMAD1/5/8 that travel to the nucleus and act as activators and repressors of transcription of target genes. Also acts to promote expression of HAMP, via the interaction with its receptor BMPR1A/ALK3. Can also signal through non-canonical pathways such as ERK/MAP kinase signaling cascade that regulates osteoblast differentiation. Also stimulates the differentiation of myoblasts into osteoblasts via the EIF2AK3-EIF2A-ATF4 pathway by stimulating EIF2A phosphorylation which leads to increased expression of ATF4 which plays a central role in osteoblast differentiation. Acts as a positive regulator of odontoblast differentiation during mesenchymal tooth germ formation, expression is repressed during the bell stage by MSX1-mediated inhibition of CTNNB1 signaling. In Rattus norvegicus (Rat), this protein is Bone morphogenetic protein 2 (Bmp2).